We begin with the raw amino-acid sequence, 587 residues long: Aspartate--tRNA(Asp/Asn) ligase (587 aa).

Residue Glu-173 coordinates L-aspartate. Residues 197–200 (QLFK) are aspartate. Arg-219 is an L-aspartate binding site. Residues 219–221 (RDE) and Gln-228 contribute to the ATP site. His-448 serves as a coordination point for L-aspartate. Glu-481 contacts ATP. Arg-488 is an L-aspartate binding site. 533–536 (GLDR) contacts ATP.

Belongs to the class-II aminoacyl-tRNA synthetase family. Type 1 subfamily. Homodimer.

The protein resides in the cytoplasm. It catalyses the reaction tRNA(Asx) + L-aspartate + ATP = L-aspartyl-tRNA(Asx) + AMP + diphosphate. In terms of biological role, aspartyl-tRNA synthetase with relaxed tRNA specificity since it is able to aspartylate not only its cognate tRNA(Asp) but also tRNA(Asn). Reaction proceeds in two steps: L-aspartate is first activated by ATP to form Asp-AMP and then transferred to the acceptor end of tRNA(Asp/Asn). This chain is Aspartate--tRNA(Asp/Asn) ligase, found in Alcanivorax borkumensis (strain ATCC 700651 / DSM 11573 / NCIMB 13689 / SK2).